Consider the following 312-residue polypeptide: Probable deoxyhypusine synthase (312 aa).

Lys285 acts as the Nucleophile in catalysis.

This sequence belongs to the deoxyhypusine synthase family. NAD(+) serves as cofactor.

The enzyme catalyses [eIF5A protein]-L-lysine + spermidine = [eIF5A protein]-deoxyhypusine + propane-1,3-diamine. Its pathway is protein modification; eIF5A hypusination. Catalyzes the NAD-dependent oxidative cleavage of spermidine and the subsequent transfer of the butylamine moiety of spermidine to the epsilon-amino group of a specific lysine residue of the eIF-5A precursor protein to form the intermediate deoxyhypusine residue. The protein is Probable deoxyhypusine synthase of Saccharolobus islandicus (strain M.16.4 / Kamchatka #3) (Sulfolobus islandicus).